The following is a 115-amino-acid chain: Regulator of ribonuclease activity B (115 aa).

This sequence belongs to the RraB family. Interacts with the C-terminal region of Rne.

It is found in the cytoplasm. Globally modulates RNA abundance by binding to RNase E (Rne) and regulating its endonucleolytic activity. Can modulate Rne action in a substrate-dependent manner by altering the composition of the degradosome. This is Regulator of ribonuclease activity B from Aeromonas salmonicida (strain A449).